The following is an 81-amino-acid chain: Small ribosomal subunit protein bS16 (81 aa).

It belongs to the bacterial ribosomal protein bS16 family.

This chain is Small ribosomal subunit protein bS16, found in Desulfotalea psychrophila (strain LSv54 / DSM 12343).